Reading from the N-terminus, the 310-residue chain is Phosphoribosylaminoimidazole-succinocarboxamide synthase (310 aa).

Belongs to the SAICAR synthetase family.

The catalysed reaction is 5-amino-1-(5-phospho-D-ribosyl)imidazole-4-carboxylate + L-aspartate + ATP = (2S)-2-[5-amino-1-(5-phospho-beta-D-ribosyl)imidazole-4-carboxamido]succinate + ADP + phosphate + 2 H(+). It participates in purine metabolism; IMP biosynthesis via de novo pathway; 5-amino-1-(5-phospho-D-ribosyl)imidazole-4-carboxamide from 5-amino-1-(5-phospho-D-ribosyl)imidazole-4-carboxylate: step 1/2. This is Phosphoribosylaminoimidazole-succinocarboxamide synthase from Stenotrophomonas maltophilia (strain K279a).